A 166-amino-acid polypeptide reads, in one-letter code: Protein-export protein SecB (166 aa).

It belongs to the SecB family. In terms of assembly, homotetramer, a dimer of dimers. One homotetramer interacts with 1 SecA dimer.

It localises to the cytoplasm. Its function is as follows. One of the proteins required for the normal export of preproteins out of the cell cytoplasm. It is a molecular chaperone that binds to a subset of precursor proteins, maintaining them in a translocation-competent state. It also specifically binds to its receptor SecA. The sequence is that of Protein-export protein SecB from Rhizorhabdus wittichii (strain DSM 6014 / CCUG 31198 / JCM 15750 / NBRC 105917 / EY 4224 / RW1) (Sphingomonas wittichii).